We begin with the raw amino-acid sequence, 206 residues long: Pyrrolidone-carboxylate peptidase (206 aa).

Active-site residues include glutamate 76, cysteine 139, and histidine 163.

Belongs to the peptidase C15 family. Homotetramer.

The protein resides in the cytoplasm. The catalysed reaction is Release of an N-terminal pyroglutamyl group from a polypeptide, the second amino acid generally not being Pro.. In terms of biological role, removes 5-oxoproline from various penultimate amino acid residues except L-proline. The protein is Pyrrolidone-carboxylate peptidase (pcp) of Pyrococcus horikoshii (strain ATCC 700860 / DSM 12428 / JCM 9974 / NBRC 100139 / OT-3).